The following is a 453-amino-acid chain: METRGPGLAVRAESRRLVGIGPRAPPGRVGLQPSGRLDRRGGAGTMGYKDNDGEEEEREGGAAGPRGSRLPPITGGASELAKRKVKKKKRKKKTKGSGKGDDKHQSQSLKSQPLSSSFHDILSPCKERGPKPEHRQSKVEKKHLPSDSSTVSLPDFAEIENLANRINESLRWDGILADPEAEKERIRIYKLNRRKRYRCLALKGFHPDPEALKGFHPDPDALKGFHPDPEALKGFHPDPEALKGFHPDPEALKGFHPDPEALKGIHPDPEALKGIHPDPEALKGFHPDPEALKGFHPDPEALKGFHTDPEALKGFHIDPEALKGFHPDPKALKGFHPDPKALKGFHTDPEALKGFHPDPKALKGFHPDPEALKGFHPDPEALKGFHPDPEALKGFHTDPNAEEAPENLPYLSDKDGSSSHRQPTSKAECPNLCFEGNLTPKLLHSDLAPTLLE.

The tract at residues 1–152 (METRGPGLAV…HLPSDSSTVS (152 aa)) is disordered. Residues 82-103 (KRKVKKKKRKKKTKGSGKGDDK) form a lysine-rich domain region. Positions 83-96 (RKVKKKKRKKKTKG) are enriched in basic residues. The span at 106 to 117 (SQSLKSQPLSSS) shows a compositional bias: low complexity. Residues 125–145 (CKERGPKPEHRQSKVEKKHLP) are compositionally biased toward basic and acidic residues. The interval 145–197 (PSDSSTVSLPDFAEIENLANRINESLRWDGILADPEAEKERIRIYKLNRRKRY) is interaction with ATE1. 20 consecutive repeat copies span residues 201–210 (ALKGFHPDPE), 211–220 (ALKGFHPDPD), 221–230 (ALKGFHPDPE), 231–240 (ALKGFHPDPE), 241–250 (ALKGFHPDPE), 251–260 (ALKGFHPDPE), 261–270 (ALKGIHPDPE), 271–280 (ALKGIHPDPE), 281–290 (ALKGFHPDPE), 291–300 (ALKGFHPDPE), 301–310 (ALKGFHTDPE), 311–320 (ALKGFHIDPE), 321–330 (ALKGFHPDPK), 331–340 (ALKGFHPDPK), 341–350 (ALKGFHTDPE), 351–360 (ALKGFHPDPK), 361–370 (ALKGFHPDPE), 371–380 (ALKGFHPDPE), 381–390 (ALKGFHPDPE), and 391–400 (ALKGFHTDPN). The tract at residues 201–400 (ALKGFHPDPE…ALKGFHTDPN (200 aa)) is 20 X 10 AA approximate tandem repeat of A-L-K-G-F-H-P-D-P-E. Disordered regions lie at residues 225–306 (FHPD…KGFH) and 320–432 (EALK…CPNL). Basic and acidic residues predominate over residues 320–396 (EALKGFHPDP…PDPEALKGFH (77 aa)).

Self-associates (via Lys-rich domain); targets LIAT1 to the nucleolus. Interacts with ATE1; it is not a substrate of ATE1, the interaction takes place in the cytoplasm and seems to increase ATE1 arginyltransferase activity. Interacts with JMJD6 and MRPS14. Post-translationally, post-translationally modified by JMJD6 lysyl-hydroxylase activity at its Lys-rich domain, which inhibits its self-association and nucleolar localization.

It localises to the nucleus. The protein resides in the nucleolus. Its subcellular location is the cytoplasm. Functionally, participates in nucleolar liquid-liquid phase separation (LLPS) through its N-terminal intrinsically disordered region (IDR). May be involved in ATE1-mediated N-terminal arginylation. The chain is Protein LIAT1 from Homo sapiens (Human).